The sequence spans 351 residues: Photosystem II D2 protein (351 aa).

Residues 39–59 (TAYLALGGWFTGTTFVTSWYT) traverse the membrane as a helical segment. His116 serves as a coordination point for chlorophyll a. The chain crosses the membrane as a helical span at residues 123 to 139 (GFMLRQFEIARLVGIRP). Gln128 and Asn141 together coordinate pheophytin a. The helical transmembrane segment at 151–164 (VFLACFLIYPLGQH) threads the bilayer. His196 contributes to the chlorophyll a binding site. Residues 206-226 (GALLCGIHGATVQNTLFEDGA) form a helical membrane-spanning segment. 2 residues coordinate a plastoquinone: His213 and Phe260. Residue His213 coordinates Fe cation. His267 contacts Fe cation. Residues 277-293 (GMWTPSVGIVGLAVNLR) form a helical membrane-spanning segment.

The protein belongs to the reaction center PufL/M/PsbA/D family. In terms of assembly, PSII is composed of 1 copy each of membrane proteins PsbA, PsbB, PsbC, PsbD, PsbE, PsbF, PsbH, PsbI, PsbJ, PsbK, PsbL, PsbM, PsbT, PsbX, PsbY, Psb30/Ycf12, peripheral proteins PsbO, CyanoQ (PsbQ), PsbU, PsbV and a large number of cofactors. It forms dimeric complexes. The D1/D2 heterodimer binds P680, chlorophylls that are the primary electron donor of PSII, and subsequent electron acceptors. It shares a non-heme iron and each subunit binds pheophytin, quinone, additional chlorophylls, carotenoids and lipids. There is also a Cl(-1) ion associated with D1 and D2, which is required for oxygen evolution. The PSII complex binds additional chlorophylls, carotenoids and specific lipids. is required as a cofactor.

The protein localises to the cellular thylakoid membrane. The catalysed reaction is 2 a plastoquinone + 4 hnu + 2 H2O = 2 a plastoquinol + O2. Its function is as follows. Photosystem II (PSII) is a light-driven water:plastoquinone oxidoreductase that uses light energy to abstract electrons from H(2)O, generating O(2) and a proton gradient subsequently used for ATP formation. It consists of a core antenna complex that captures photons, and an electron transfer chain that converts photonic excitation into a charge separation. The D1/D2 (PsbA/PsbD) reaction center heterodimer binds P680, the primary electron donor of PSII as well as several subsequent electron acceptors. D2 is needed for assembly of a stable PSII complex. The chain is Photosystem II D2 protein from Prochlorococcus marinus (strain MIT 9313).